We begin with the raw amino-acid sequence, 131 residues long: Histone H2B.2 (131 aa).

The span at 1-20 (MAPPKAEKKPASKAPAEKKP) shows a compositional bias: basic and acidic residues. The tract at residues 1–39 (MAPPKAEKKPASKAPAEKKPAAKKTASSTDAKKRTKTRK) is disordered. K8 and K9 each carry N6-acetyllysine; alternate. Residues K8 and K9 each participate in a glycyl lysine isopeptide (Lys-Gly) (interchain with G-Cter in SUMO); alternate cross-link. Phosphoserine is present on S12. N6-acetyllysine is present on K13. K18 is subject to N6-acetyllysine; alternate. Residue K18 forms a Glycyl lysine isopeptide (Lys-Gly) (interchain with G-Cter in SUMO); alternate linkage. Residue K19 forms a Glycyl lysine isopeptide (Lys-Gly) (interchain with G-Cter in SUMO) linkage. K125 is covalently cross-linked (Glycyl lysine isopeptide (Lys-Gly) (interchain with G-Cter in ubiquitin)).

This sequence belongs to the histone H2B family. The nucleosome is a histone octamer containing two molecules each of H2A, H2B, H3 and H4 assembled in one H3-H4 heterotetramer and two H2A-H2B heterodimers. The octamer wraps approximately 147 bp of DNA. Monoubiquitinated to form H2BK123ub1. H2BK123ub1 gives a specific tag for epigenetic transcriptional activation and is also prerequisite for H3K4me and H3K79me formation. H2BK123ub1 also modulates the formation of double-strand breaks during meiosis and is a prerequisite for DNA-damage checkpoint activation. In terms of processing, phosphorylated by STE20 to form H2BS10ph during progression through meiotic prophase. May be correlated with chromosome condensation. Post-translationally, acetylated by GCN5 to form H2BK11ac and H2BK16ac. H2BK16ac can also be formed by ESA1. Acetylation of N-terminal lysines and particularly formation of H2BK11acK16ac has a positive effect on transcription. Sumoylation to form H2BK6su or H2BK7su, and probably also H2BK16su or H2BK17su, occurs preferentially near the telomeres and represses gene transcription.

Its subcellular location is the nucleus. The protein localises to the chromosome. Its function is as follows. Core component of nucleosome. Nucleosomes wrap and compact DNA into chromatin, limiting DNA accessibility to the cellular machineries which require DNA as a template. Histones thereby play a central role in transcription regulation, DNA repair, DNA replication and chromosomal stability. DNA accessibility is regulated via a complex set of post-translational modifications of histones, also called histone code, and nucleosome remodeling. The polypeptide is Histone H2B.2 (HTB2) (Scheffersomyces stipitis (strain ATCC 58785 / CBS 6054 / NBRC 10063 / NRRL Y-11545) (Yeast)).